We begin with the raw amino-acid sequence, 338 residues long: Protein WVD2-like 2 (338 aa).

A compositionally biased stretch (basic and acidic residues) spans 1–14 (MGRELVDKHMDKKA). Positions 1–150 (MGRELVDKHM…SFSVASSSAT (150 aa)) are disordered. Polar residues-rich tracts occupy residues 15-37 (NSLT…STNE) and 59-69 (QGITETPGSHK). Over residues 100 to 115 (NNSLGNGASHNSSSAS) the composition is skewed to low complexity. Residues 128–138 (RIPDHKMHHDE) are compositionally biased toward basic and acidic residues. Residues 177-214 (REFYQKLEEKQKALEAEKRENEKRLKEEQEAVTKQLRK) are a coiled coil. Positions 222 to 338 (PVPSFYQEGP…GENGVGVVEE (117 aa)) are disordered. Residues 288 to 300 (TNSVPRTPNSSSK) show a composition bias toward polar residues.

Belongs to the TPX2 family. Expressed in seedlings.

It localises to the cytoplasm. The protein localises to the cytoskeleton. Microtubule-associated protein (MAP) that regulates the orientation of interphase cortical microtubules. The protein is Protein WVD2-like 2 of Arabidopsis thaliana (Mouse-ear cress).